The sequence spans 152 residues: Lipoprotein signal peptidase (152 aa).

Transmembrane regions (helical) follow at residues 55–75 and 85–105; these read NKMWFFYIITVIFVAFIVFYM and LGISLGLILGGAIGNFIDRVF. Residues Asp-111 and Asp-129 contribute to the active site. Residues 124-144 traverse the membrane as a helical segment; sequence VFNIADSALCIGVVLIIIQTV.

This sequence belongs to the peptidase A8 family.

It is found in the cell membrane. The enzyme catalyses Release of signal peptides from bacterial membrane prolipoproteins. Hydrolyzes -Xaa-Yaa-Zaa-|-(S,diacylglyceryl)Cys-, in which Xaa is hydrophobic (preferably Leu), and Yaa (Ala or Ser) and Zaa (Gly or Ala) have small, neutral side chains.. Its pathway is protein modification; lipoprotein biosynthesis (signal peptide cleavage). In terms of biological role, this protein specifically catalyzes the removal of signal peptides from prolipoproteins. In Bacillus mycoides (strain KBAB4) (Bacillus weihenstephanensis), this protein is Lipoprotein signal peptidase.